The primary structure comprises 500 residues: Transcription termination factor MTERF8, chloroplastic (500 aa).

The transit peptide at methionine 1–arginine 64 directs the protein to the chloroplast.

Belongs to the mTERF family.

It localises to the plastid. Its subcellular location is the chloroplast. Transcription termination factor that is transcriptionally active in chloroplasts. This Arabidopsis thaliana (Mouse-ear cress) protein is Transcription termination factor MTERF8, chloroplastic.